The following is a 362-amino-acid chain: Alkanal monooxygenase alpha chain (362 aa).

This sequence belongs to the bacterial luciferase oxidoreductase family. In terms of assembly, heterodimer of an alpha and a beta chain.

The enzyme catalyses a long-chain fatty aldehyde + FMNH2 + O2 = a long-chain fatty acid + hnu + FMN + H2O + 2 H(+). Its function is as follows. Light-emitting reaction in luminous bacteria. This is Alkanal monooxygenase alpha chain (luxA) from Photorhabdus luminescens (Xenorhabdus luminescens).